The following is a 717-amino-acid chain: Serine/threonine-protein kinase STE11 (717 aa).

The SAM domain occupies 20 to 84 (NDLPFVQLFL…LRKSKSFQRD (65 aa)). Phosphoserine is present on Ser323. Positions 415–712 (WLKGACIGSG…ALELLQHPWL (298 aa)) constitute a Protein kinase domain. ATP is bound by residues 421–429 (IGSGSFGSV) and Lys444. Residues 452 to 466 (NIGVPTDNNKQANSD) are compositionally biased toward polar residues. Residues 452 to 481 (NIGVPTDNNKQANSDENNEQEEQQEKIEDV) form a disordered region. Ser465 carries the phosphoserine modification. Asp579 (proton acceptor) is an active-site residue.

Belongs to the protein kinase superfamily. STE Ser/Thr protein kinase family. MAP kinase kinase kinase subfamily. In terms of assembly, homodimer. Interacts (via SAM domain) with STE50 (via SAM domain). Interacts with PBS2 and SHO1.

It carries out the reaction L-seryl-[protein] + ATP = O-phospho-L-seryl-[protein] + ADP + H(+). The enzyme catalyses L-threonyl-[protein] + ATP = O-phospho-L-threonyl-[protein] + ADP + H(+). Functionally, serine/threonine protein kinase required for cell-type-specific transcription and signal transduction in yeast. It is thought that it phosphorylates the STE7 protein kinase which itself, phosphorylates the FUS3 and or KSS1 kinases. This Saccharomyces cerevisiae (strain ATCC 204508 / S288c) (Baker's yeast) protein is Serine/threonine-protein kinase STE11 (STE11).